The following is a 154-amino-acid chain: Aspartate carbamoyltransferase regulatory chain (154 aa).

Zn(2+) contacts are provided by cysteine 109, cysteine 114, cysteine 138, and cysteine 141.

The protein belongs to the PyrI family. Contains catalytic and regulatory chains. Requires Zn(2+) as cofactor.

Functionally, involved in allosteric regulation of aspartate carbamoyltransferase. The sequence is that of Aspartate carbamoyltransferase regulatory chain from Aeromonas hydrophila subsp. hydrophila (strain ATCC 7966 / DSM 30187 / BCRC 13018 / CCUG 14551 / JCM 1027 / KCTC 2358 / NCIMB 9240 / NCTC 8049).